Reading from the N-terminus, the 381-residue chain is Flap endonuclease 1 (381 aa).

Residues 1–105 are N-domain; sequence MGIKNLATLI…YELDKRKVRR (105 aa). Asp-34 is a binding site for Mg(2+). Positions 47 and 71 each coordinate DNA. Residues Asp-87, Glu-156, Glu-158, Asp-177, and Asp-179 each contribute to the Mg(2+) site. The interval 120-251 is I-domain; that stretch reads EIIKHERRLV…VNALKLIKEH (132 aa). Position 156 (Glu-156) interacts with DNA. DNA contacts are provided by Gly-229 and Asp-231. Mg(2+) is bound at residue Asp-231. The interval 339 to 347 is interaction with PCNA; sequence VQKRLDSFF. The disordered stretch occupies residues 360-381; sequence AAKKAKDAKKKAAAKGKIAKRR. The segment covering 365–381 has biased composition (basic residues); sequence KDAKKKAAAKGKIAKRR.

Belongs to the XPG/RAD2 endonuclease family. FEN1 subfamily. Interacts with PCNA. Three molecules of FEN1 bind to one PCNA trimer with each molecule binding to one PCNA monomer. PCNA stimulates the nuclease activity without altering cleavage specificity. It depends on Mg(2+) as a cofactor. Phosphorylated. Phosphorylation upon DNA damage induces relocalization to the nuclear plasma.

It localises to the nucleus. Its subcellular location is the nucleolus. The protein localises to the nucleoplasm. The protein resides in the mitochondrion. Functionally, structure-specific nuclease with 5'-flap endonuclease and 5'-3' exonuclease activities involved in DNA replication and repair. During DNA replication, cleaves the 5'-overhanging flap structure that is generated by displacement synthesis when DNA polymerase encounters the 5'-end of a downstream Okazaki fragment. It enters the flap from the 5'-end and then tracks to cleave the flap base, leaving a nick for ligation. Also involved in the long patch base excision repair (LP-BER) pathway, by cleaving within the apurinic/apyrimidinic (AP) site-terminated flap. Acts as a genome stabilization factor that prevents flaps from equilibrating into structures that lead to duplications and deletions. Also possesses 5'-3' exonuclease activity on nicked or gapped double-stranded DNA, and exhibits RNase H activity. Also involved in replication and repair of rDNA and in repairing mitochondrial DNA. In Kluyveromyces lactis (strain ATCC 8585 / CBS 2359 / DSM 70799 / NBRC 1267 / NRRL Y-1140 / WM37) (Yeast), this protein is Flap endonuclease 1.